A 266-amino-acid chain; its full sequence is Large ribosomal subunit protein eL8 (266 aa).

Basic residues predominate over residues 1–11; that stretch reads MPKGKKAKGKK. Disordered stretches follow at residues 1 to 28 and 105 to 134; these read MPKG…KKVV and ETKQ…KRPP. The segment covering 116 to 130 has biased composition (basic and acidic residues); the sequence is ARAEQKAAGKGDAPT.

Belongs to the eukaryotic ribosomal protein eL8 family. Component of the large ribosomal subunit.

Its subcellular location is the cytoplasm. In terms of biological role, component of the large ribosomal subunit. The ribosome is a large ribonucleoprotein complex responsible for the synthesis of proteins in the cell. This is Large ribosomal subunit protein eL8 (rpl7a) from Takifugu rubripes (Japanese pufferfish).